The chain runs to 905 residues: METSTTTTLLQQERIPENSEPISTHIHTHSLPPTPPGTAKPSRIGSFHDLQELSSVESPRLDHIKPYPLPPKFSPKSVLKEDLKTPDNFVERDPRLIRLTGVHPFNVEAPLSDLYDEGFLTSENLHYVRNHGHVPRCEDDDILDWEFEISGLVENPIKMNVRDLINDYQQLTYPVTFVCAGNRRKEQNIVRKTKGFSWGPAGLSTALWTGVAIGDLLSAAKPKRGARYVCFEGADKLPNGYYGTSIKLNWCMDPNRGVMVAHKMNGNPLPPDHGKPVRIVIPGQIGGRSIKWLKKITITQEPSDNWYHIYDNRVLPTMISPEESANLPEVWKDEKYAIYDLSTNSAICYPAHEEKVPFTDAPASYKVRGYAYSGGGRRITRVEVTLDKGKSWRLANIRYPEDDYRNAPEGDTLYGGRVDMWWRETSFCWCFWDLDIPLDELKSADDIMMRAMDESMNVQPRDMYWSVLGMMNNPWFRIVIHKEDHALRFEHPTHATLKIKGWMERVKEAGGDLTNGYWGEKAPGEVQEVVVKEPEKQICMTNPQINRKITIEELKAHSGEEEPWFVVKGEVYDGTPYLSGHPGGAASIFGAAGQDATEEFMAIHSENAKAMLPTYHIGTLDEESRAILSGDATKTNDDADREVFLQAKTWSKAILDKKTSISPDTKIFSFKLNHEAQKIGLPTGQHLMMRLRDPATREAIIRSYTPYSDGSDCGRLDILIKIYYDTPQRKGGVMTQALDALPIGHWVDFKGPTGKFVYHGNGLCTINEKERRVRRFIMVCGGSGITPIRQVLRAVIDNPKDTTPCLVFNGNRSVNDILCMEELEELEAANPSRCRVVNALSNPPPEWNGLKGFVNQALVPEYMDLPKASGEGDELLLVCGPPPMVKAVEASFLGMGFKSDDFVFF.

The tract at residues Met1–Ser42 is disordered. Mo-molybdopterin is bound at residue Cys179. The region spanning Asn546–Asp621 is the Cytochrome b5 heme-binding domain. Positions 581 and 604 each coordinate heme. Positions Lys648–His759 constitute an FAD-binding FR-type domain. FAD is bound by residues Arg702 to Thr705, Leu719 to Tyr723, Val733 to Thr735, Ser783, and Thr786. Leu875 to Met884 is a binding site for NADP(+).

This sequence belongs to the nitrate reductase family. Homodimer. The cofactor is FAD. It depends on heme as a cofactor. Mo-molybdopterin is required as a cofactor.

It carries out the reaction nitrite + NADP(+) + H2O = nitrate + NADPH + H(+). Nitrate reductase is a key enzyme involved in the first step of nitrate assimilation in plants, fungi and bacteria. The chain is Nitrate reductase [NADPH] (NIA) from Fusarium oxysporum (Fusarium vascular wilt).